A 101-amino-acid polypeptide reads, in one-letter code: Small ribosomal subunit protein uS14 (101 aa).

Belongs to the universal ribosomal protein uS14 family. As to quaternary structure, part of the 30S ribosomal subunit. Contacts proteins S3 and S10.

In terms of biological role, binds 16S rRNA, required for the assembly of 30S particles and may also be responsible for determining the conformation of the 16S rRNA at the A site. This chain is Small ribosomal subunit protein uS14, found in Stutzerimonas stutzeri (strain A1501) (Pseudomonas stutzeri).